Reading from the N-terminus, the 278-residue chain is 3-methyl-2-oxobutanoate hydroxymethyltransferase (278 aa).

Mg(2+)-binding residues include Asp-43 and Asp-82. 3-methyl-2-oxobutanoate is bound by residues 43-44 (DS), Asp-82, and Lys-112. Position 114 (Glu-114) interacts with Mg(2+). The Proton acceptor role is filled by Glu-181.

This sequence belongs to the PanB family. In terms of assembly, homodecamer; pentamer of dimers. Mg(2+) serves as cofactor.

It is found in the cytoplasm. It carries out the reaction 3-methyl-2-oxobutanoate + (6R)-5,10-methylene-5,6,7,8-tetrahydrofolate + H2O = 2-dehydropantoate + (6S)-5,6,7,8-tetrahydrofolate. Its pathway is cofactor biosynthesis; (R)-pantothenate biosynthesis; (R)-pantoate from 3-methyl-2-oxobutanoate: step 1/2. In terms of biological role, catalyzes the reversible reaction in which hydroxymethyl group from 5,10-methylenetetrahydrofolate is transferred onto alpha-ketoisovalerate to form ketopantoate. The chain is 3-methyl-2-oxobutanoate hydroxymethyltransferase from Bacillus cereus (strain B4264).